The chain runs to 300 residues: MDLPPQLSFALYVSAFALGFPLNLLAIRGAVSHAKLRLTPSLVYTLHLACSDLLLAITLPLKAVEALASGVWPLPLPFCPVFALAHFAPLYAGGGFLAALSAGRYLGAAFPFGYQAIRRPCYSWGVCVAIWALVLCHLGLALGLEAPRGWVDNTTSSLGINIPVNGSPVCLEAWDPDSARPARLSFSILLFFLPLVITAFCYVGCLRALVHSGLSHKRKLRAAWVAGGALLTLLLCLGPYNASNVASFINPDLEGSWRKLGLITGAWSVVLNPLVTGYLGTGPGQGTICVTRTPRGTIQK.

Residues 1–8 (MDLPPQLS) are Extracellular-facing. Residues 9–31 (FALYVSAFALGFPLNLLAIRGAV) traverse the membrane as a helical segment. Topologically, residues 32–41 (SHAKLRLTPS) are cytoplasmic. The chain crosses the membrane as a helical span at residues 42–64 (LVYTLHLACSDLLLAITLPLKAV). Over 65–79 (EALASGVWPLPLPFC) the chain is Extracellular. Cys79 and Cys170 form a disulfide bridge. The helical transmembrane segment at 80 to 101 (PVFALAHFAPLYAGGGFLAALS) threads the bilayer. Topologically, residues 102–121 (AGRYLGAAFPFGYQAIRRPC) are cytoplasmic. The chain crosses the membrane as a helical span at residues 122–142 (YSWGVCVAIWALVLCHLGLAL). At 143–178 (GLEAPRGWVDNTTSSLGINIPVNGSPVCLEAWDPDS) the chain is on the extracellular side. Asn153 carries an N-linked (GlcNAc...) asparagine glycan. Residues 179–200 (ARPARLSFSILLFFLPLVITAF) form a helical membrane-spanning segment. Topologically, residues 201-223 (CYVGCLRALVHSGLSHKRKLRAA) are cytoplasmic. A helical transmembrane segment spans residues 224–248 (WVAGGALLTLLLCLGPYNASNVASF). Residues 249 to 256 (INPDLEGS) lie on the Extracellular side of the membrane. The chain crosses the membrane as a helical span at residues 257 to 279 (WRKLGLITGAWSVVLNPLVTGYL). Topologically, residues 280-300 (GTGPGQGTICVTRTPRGTIQK) are cytoplasmic.

It belongs to the G-protein coupled receptor 1 family. Expressed abundantly in pancreatic beta cells.

It localises to the cell membrane. Its function is as follows. G-protein coupled receptor for medium and long chain saturated and unsaturated fatty acids that plays an important role in glucose homeostasis. Fatty acid binding increases glucose-stimulated insulin secretion, and may also enhance the secretion of glucagon-like peptide 1 (GLP-1). May also play a role in bone homeostasis; receptor signaling activates pathways that inhibit osteoclast differentiation. Ligand binding leads to a conformation change that triggers signaling via G-proteins that activate phospholipase C, leading to an increase of the intracellular calcium concentration. Seems to act through a G(q) and G(i)-mediated pathway. Mediates the anti-inflammatory effects of omega-3 polyunsaturated fatty acids (PUFAs) via inhibition of NLRP3 inflammasome activation. The chain is Free fatty acid receptor 1 (Ffar1) from Rattus norvegicus (Rat).